A 167-amino-acid chain; its full sequence is Ribosome-binding factor A (167 aa).

The tract at residues 122-167 (LAASAKHAGEADPYKGDSPEDIDEDDFDEEDTDLSGDNDLDEDANR) is disordered. Residues 128 to 139 (HAGEADPYKGDS) are compositionally biased toward basic and acidic residues. Residues 140–167 (PEDIDEDDFDEEDTDLSGDNDLDEDANR) show a composition bias toward acidic residues.

It belongs to the RbfA family. Monomer. Binds 30S ribosomal subunits, but not 50S ribosomal subunits or 70S ribosomes.

It localises to the cytoplasm. Functionally, one of several proteins that assist in the late maturation steps of the functional core of the 30S ribosomal subunit. Associates with free 30S ribosomal subunits (but not with 30S subunits that are part of 70S ribosomes or polysomes). Required for efficient processing of 16S rRNA. May interact with the 5'-terminal helix region of 16S rRNA. The sequence is that of Ribosome-binding factor A from Paenarthrobacter aurescens (strain TC1).